A 353-amino-acid polypeptide reads, in one-letter code: MTVVLDRRKSENLWGRFCNWITSTENRLYIGWFGVLMIPTLLTATSVFLIAFIAAPPVDIDGIREPVSGSLLYGNNIISGAIIPTSAAIGLHFYPIWEAASIAEWLYNGGPYELIVLHFLLGVACYMGREWELSFRLGMRPWIAIAYSAPVAAATAVFLIYPIGQGSFSDGMPLGISGTFNFMIVFQAEHNILMHPFHMLGVAGVFGGSLFSAMHGSLVTSSLIRETTESESANKGYKFGQEEETYNIVAAHGYFGRLIFQYASFNNSRSLHFFLAAWPVIGIWFTALGISTMAFNLNGFNFNQSVVDSKGHVINTWADIINRANLGMEVMHERNAHNFPLDLATFEVSATNA.

T2 carries the post-translational modification N-acetylthreonine. The residue at position 2 (T2) is a Phosphothreonine. Transmembrane regions (helical) follow at residues Y29–S46, H118–L133, and W142–A156. H118 is a binding site for chlorophyll a. Y126 contributes to the pheophytin a binding site. [CaMn4O5] cluster is bound by residues D170 and E189. A helical membrane pass occupies residues F197 to L218. Residue H198 participates in chlorophyll a binding. A quinone is bound by residues H215 and S264–F265. A Fe cation-binding site is contributed by H215. H272 contributes to the Fe cation binding site. The helical transmembrane segment at F274–L288 threads the bilayer. H332, E333, D342, and A344 together coordinate [CaMn4O5] cluster. Residues T345–A353 constitute a propeptide that is removed on maturation.

This sequence belongs to the reaction center PufL/M/PsbA/D family. PSII is composed of 1 copy each of membrane proteins PsbA, PsbB, PsbC, PsbD, PsbE, PsbF, PsbH, PsbI, PsbJ, PsbK, PsbL, PsbM, PsbT, PsbX, PsbY, PsbZ, Psb30/Ycf12, at least 3 peripheral proteins of the oxygen-evolving complex and a large number of cofactors. It forms dimeric complexes. Requires The D1/D2 heterodimer binds P680, chlorophylls that are the primary electron donor of PSII, and subsequent electron acceptors. It shares a non-heme iron and each subunit binds pheophytin, quinone, additional chlorophylls, carotenoids and lipids. D1 provides most of the ligands for the Mn4-Ca-O5 cluster of the oxygen-evolving complex (OEC). There is also a Cl(-1) ion associated with D1 and D2, which is required for oxygen evolution. The PSII complex binds additional chlorophylls, carotenoids and specific lipids. as cofactor. Post-translationally, tyr-161 forms a radical intermediate that is referred to as redox-active TyrZ, YZ or Y-Z. C-terminally processed by CTPA; processing is essential to allow assembly of the oxygen-evolving complex and thus photosynthetic growth.

It localises to the plastid membrane. The enzyme catalyses 2 a plastoquinone + 4 hnu + 2 H2O = 2 a plastoquinol + O2. In terms of biological role, photosystem II (PSII) is a light-driven water:plastoquinone oxidoreductase that uses light energy to abstract electrons from H(2)O, generating O(2) and a proton gradient subsequently used for ATP formation. It consists of a core antenna complex that captures photons, and an electron transfer chain that converts photonic excitation into a charge separation. The D1/D2 (PsbA/PsbD) reaction center heterodimer binds P680, the primary electron donor of PSII as well as several subsequent electron acceptors. The chain is Photosystem II protein D1 from Cuscuta gronovii (Common dodder).